The chain runs to 202 residues: ATP-dependent Clp protease proteolytic subunit (202 aa).

The active-site Nucleophile is Ser-106. His-131 is an active-site residue.

The protein belongs to the peptidase S14 family. As to quaternary structure, fourteen ClpP subunits assemble into 2 heptameric rings which stack back to back to give a disk-like structure with a central cavity, resembling the structure of eukaryotic proteasomes.

It is found in the cytoplasm. The catalysed reaction is Hydrolysis of proteins to small peptides in the presence of ATP and magnesium. alpha-casein is the usual test substrate. In the absence of ATP, only oligopeptides shorter than five residues are hydrolyzed (such as succinyl-Leu-Tyr-|-NHMec, and Leu-Tyr-Leu-|-Tyr-Trp, in which cleavage of the -Tyr-|-Leu- and -Tyr-|-Trp bonds also occurs).. Functionally, cleaves peptides in various proteins in a process that requires ATP hydrolysis. Has a chymotrypsin-like activity. Plays a major role in the degradation of misfolded proteins. The sequence is that of ATP-dependent Clp protease proteolytic subunit from Shewanella sp. (strain W3-18-1).